Consider the following 178-residue polypeptide: ATP synthase subunit delta (178 aa).

The protein belongs to the ATPase delta chain family. As to quaternary structure, F-type ATPases have 2 components, F(1) - the catalytic core - and F(0) - the membrane proton channel. F(1) has five subunits: alpha(3), beta(3), gamma(1), delta(1), epsilon(1). F(0) has three main subunits: a(1), b(2) and c(10-14). The alpha and beta chains form an alternating ring which encloses part of the gamma chain. F(1) is attached to F(0) by a central stalk formed by the gamma and epsilon chains, while a peripheral stalk is formed by the delta and b chains.

Its subcellular location is the cell inner membrane. In terms of biological role, f(1)F(0) ATP synthase produces ATP from ADP in the presence of a proton or sodium gradient. F-type ATPases consist of two structural domains, F(1) containing the extramembraneous catalytic core and F(0) containing the membrane proton channel, linked together by a central stalk and a peripheral stalk. During catalysis, ATP synthesis in the catalytic domain of F(1) is coupled via a rotary mechanism of the central stalk subunits to proton translocation. Its function is as follows. This protein is part of the stalk that links CF(0) to CF(1). It either transmits conformational changes from CF(0) to CF(1) or is implicated in proton conduction. The protein is ATP synthase subunit delta of Pseudomonas putida (strain W619).